We begin with the raw amino-acid sequence, 39 residues long: Large ribosomal subunit protein bL12 (39 aa).

It belongs to the bacterial ribosomal protein bL12 family. As to quaternary structure, homodimer. Part of the ribosomal stalk of the 50S ribosomal subunit. Forms a multimeric L10(L12)X complex, where L10 forms an elongated spine to which 2 to 4 L12 dimers bind in a sequential fashion. Binds GTP-bound translation factors.

Functionally, forms part of the ribosomal stalk which helps the ribosome interact with GTP-bound translation factors. Is thus essential for accurate translation. The chain is Large ribosomal subunit protein bL12 (rplL) from Arthrobacter glacialis.